The chain runs to 349 residues: Putative phytanoyl-CoA dioxygenase (349 aa).

Residues lysine 118 and 169 to 171 (HLD) each bind 2-oxoglutarate. Residues histidine 169 and aspartate 171 each coordinate Fe cation.

The protein belongs to the PhyH family. Fe cation is required as a cofactor. The cofactor is L-ascorbate.

It carries out the reaction phytanoyl-CoA + 2-oxoglutarate + O2 = 2-hydroxyphytanoyl-CoA + succinate + CO2. The protein operates within lipid metabolism; fatty acid metabolism. Functionally, converts phytanoyl-CoA to 2-hydroxyphytanoyl-CoA. This Dictyostelium discoideum (Social amoeba) protein is Putative phytanoyl-CoA dioxygenase.